The primary structure comprises 346 residues: MSEAYKQAGVDIDAGNEAVERMKKHVKRTFRPEVMTDLGGFGALFRLDTKKYEKPILVSGTDGVGTKLKLAFAMDKHDTIGIDAVAMCVNDVVVQGAEPLFFLDYLAVDKVIPEKIEAIVKGIAEGCSQSGCSLIGGETAEMPGMYAEGEYDIAGFTVGVVDESKMITGASVAAGDVLIGLASSGVHSNGFSLVRKVLLADKGMSLHDHVDVLGKKLGEELLTPTRIYVKQVLSVLESHEVKALVHITGGGFTENIPRVLPEGMQAVINVGSWPVLPIFELVQGAGNISYPDMYKTFNMGIGMMLVVKPEDAVSVMEKLQELGEQAYLIGNIQAGERKVVYNGVEW.

It belongs to the AIR synthase family.

Its subcellular location is the cytoplasm. It catalyses the reaction 2-formamido-N(1)-(5-O-phospho-beta-D-ribosyl)acetamidine + ATP = 5-amino-1-(5-phospho-beta-D-ribosyl)imidazole + ADP + phosphate + H(+). It functions in the pathway purine metabolism; IMP biosynthesis via de novo pathway; 5-amino-1-(5-phospho-D-ribosyl)imidazole from N(2)-formyl-N(1)-(5-phospho-D-ribosyl)glycinamide: step 2/2. This Brevibacillus brevis (strain 47 / JCM 6285 / NBRC 100599) protein is Phosphoribosylformylglycinamidine cyclo-ligase.